Here is a 285-residue protein sequence, read N- to C-terminus: Glycine--tRNA ligase alpha subunit (285 aa).

Belongs to the class-II aminoacyl-tRNA synthetase family. In terms of assembly, tetramer of two alpha and two beta subunits.

It is found in the cytoplasm. It carries out the reaction tRNA(Gly) + glycine + ATP = glycyl-tRNA(Gly) + AMP + diphosphate. The chain is Glycine--tRNA ligase alpha subunit from Thermodesulfovibrio yellowstonii (strain ATCC 51303 / DSM 11347 / YP87).